The sequence spans 116 residues: Nucleoid-associated protein A9601_00191 (116 aa).

The protein belongs to the YbaB/EbfC family. In terms of assembly, homodimer.

Its subcellular location is the cytoplasm. The protein localises to the nucleoid. In terms of biological role, binds to DNA and alters its conformation. May be involved in regulation of gene expression, nucleoid organization and DNA protection. The polypeptide is Nucleoid-associated protein A9601_00191 (Prochlorococcus marinus (strain AS9601)).